A 332-amino-acid polypeptide reads, in one-letter code: L-lactate dehydrogenase A chain (332 aa).

NAD(+) contacts are provided by residues 29 to 57 (GMVG…MEDK) and arginine 99. Substrate is bound by residues arginine 106, asparagine 138, and arginine 169. Position 138 (asparagine 138) interacts with NAD(+). The active-site Proton acceptor is histidine 193. Threonine 248 lines the substrate pocket.

The protein belongs to the LDH/MDH superfamily. LDH family. As to quaternary structure, homotetramer.

It is found in the cytoplasm. It catalyses the reaction (S)-lactate + NAD(+) = pyruvate + NADH + H(+). The protein operates within fermentation; pyruvate fermentation to lactate; (S)-lactate from pyruvate: step 1/1. Interconverts simultaneously and stereospecifically pyruvate and lactate with concomitant interconversion of NADH and NAD(+). This is L-lactate dehydrogenase A chain (ldha) from Sphyraena lucasana (Lucas barracuda).